Here is a 219-residue protein sequence, read N- to C-terminus: Ropporin-1-like protein (219 aa).

Residues 17–54 (PELPDILKQFTKAAIRTQPHDLLQWSAAYFDSLSKGEP) form the RIIa domain.

It belongs to the ropporin family. Component of axonemal radial spoke complexes.

It localises to the cell projection. Its subcellular location is the cilium. The protein resides in the flagellum. Functionally, functions as part of axonemal radial spoke complexes that play an important part in the motility of sperm and cilia. Important for male fertility. Involved in fibrous sheath integrity and sperm motility, plays a role in PKA-dependent signaling processes required for spermatozoa capacitation. This is Ropporin-1-like protein (ropn1l) from Xenopus laevis (African clawed frog).